The sequence spans 569 residues: Potassium-transporting ATPase potassium-binding subunit (569 aa).

The next 10 helical transmembrane spans lie at 3 to 23 (TEILGVALQILLLLVISYPLG), 64 to 84 (FLKSLLIINVFWFFWGMILLV), 133 to 153 (FVIMLFQFITAATGMAAMAGI), 179 to 199 (ILFPMSLIVGFILIIQGTPMG), 255 to 275 (IVECWSILIIPMALVFALGFY), 281 to 301 (LGYVIYGVMLFAYLLGVFCNV), 375 to 395 (FGGVGVGFMNYYAFLIIAVFI), 421 to 441 (IVSLAHPFVILIFTAISSYVW), 497 to 517 (LALIISRYLPIVGQVAIAGLL), and 535 to 555 (VTFGVMTFFVIVIVAALSFFP).

It belongs to the KdpA family. As to quaternary structure, the system is composed of three essential subunits: KdpA, KdpB and KdpC.

Its subcellular location is the cell inner membrane. Part of the high-affinity ATP-driven potassium transport (or Kdp) system, which catalyzes the hydrolysis of ATP coupled with the electrogenic transport of potassium into the cytoplasm. This subunit binds the periplasmic potassium ions and delivers the ions to the membrane domain of KdpB through an intramembrane tunnel. This chain is Potassium-transporting ATPase potassium-binding subunit, found in Parabacteroides distasonis (strain ATCC 8503 / DSM 20701 / CIP 104284 / JCM 5825 / NCTC 11152).